The primary structure comprises 290 residues: Uridine diphosphate glucose pyrophosphatase NUDT22 (290 aa).

Residues Phe-56, Tyr-87, Arg-139, Ala-144, Asp-151, His-156, and Glu-158 each coordinate substrate. The region spanning 118 to 285 (ADPLGVGAAL…KGAIFLYNRV (168 aa)) is the Nudix hydrolase domain. Positions 175–196 (GELVVHELFSSVLQEICDEVNV) match the Nudix box motif. Residues Glu-189 and Glu-193 each contribute to the Mg(2+) site. Ser-274 is a binding site for substrate.

This sequence belongs to the Nudix family. It depends on Mg(2+) as a cofactor.

It carries out the reaction UDP-sugar + H2O = UMP + alpha-D-aldose 1-phosphate.. Its function is as follows. Hydrolyzes UDP-glucose to glucose 1-phosphate and UMP and UDP-galactose to galactose 1-phosphate and UMP. Preferred substrate is UDP-glucose. The sequence is that of Uridine diphosphate glucose pyrophosphatase NUDT22 (NUDT22) from Bos taurus (Bovine).